A 505-amino-acid chain; its full sequence is DNA primase DnaG (505 aa).

Residues 167–241 (DAVIVVEGRA…DVDYVAFAPP (75 aa)) enclose the Toprim domain. Mg(2+) is bound by residues glutamate 173, aspartate 215, and aspartate 217. Residues 268–410 (DEPNLREAAT…PLDNEPRSIE (143 aa)) are disordered. Residues 318-327 (AGVVAGGARS) are compositionally biased toward low complexity. 2 stretches are compositionally biased toward acidic residues: residues 349 to 376 (GEVD…DAEF) and 384 to 402 (PNLD…DAPL).

The protein belongs to the archaeal DnaG primase family. Forms a ternary complex with MCM helicase and DNA. It depends on Mg(2+) as a cofactor.

The catalysed reaction is ssDNA + n NTP = ssDNA/pppN(pN)n-1 hybrid + (n-1) diphosphate.. In terms of biological role, RNA polymerase that catalyzes the synthesis of short RNA molecules used as primers for DNA polymerase during DNA replication. This Halorubrum lacusprofundi (strain ATCC 49239 / DSM 5036 / JCM 8891 / ACAM 34) protein is DNA primase DnaG.